A 428-amino-acid polypeptide reads, in one-letter code: Gamma-glutamyl phosphate reductase (428 aa).

The protein belongs to the gamma-glutamyl phosphate reductase family.

The protein localises to the cytoplasm. It catalyses the reaction L-glutamate 5-semialdehyde + phosphate + NADP(+) = L-glutamyl 5-phosphate + NADPH + H(+). It participates in amino-acid biosynthesis; L-proline biosynthesis; L-glutamate 5-semialdehyde from L-glutamate: step 2/2. Catalyzes the NADPH-dependent reduction of L-glutamate 5-phosphate into L-glutamate 5-semialdehyde and phosphate. The product spontaneously undergoes cyclization to form 1-pyrroline-5-carboxylate. The chain is Gamma-glutamyl phosphate reductase from Treponema pallidum (strain Nichols).